A 145-amino-acid polypeptide reads, in one-letter code: LIRP (145 aa).

A signal peptide (or 22) is located at residues 1–19 (MWKLCLRLLAVLAVCLSTA). 2 propeptides span residues 20-33 (TQAQ…SPKR) and 117-122 (FRRRTR). Disulfide bonds link cysteine 44-cysteine 129, cysteine 56-cysteine 142, and cysteine 128-cysteine 133.

Belongs to the insulin family. As to quaternary structure, heterodimer of a B chain and an A chain linked by two disulfide bonds.

It localises to the secreted. This Locusta migratoria (Migratory locust) protein is LIRP.